A 355-amino-acid polypeptide reads, in one-letter code: Nicotinate-nucleotide--dimethylbenzimidazole phosphoribosyltransferase (355 aa).

Glu321 (proton acceptor) is an active-site residue.

The protein belongs to the CobT family.

The enzyme catalyses 5,6-dimethylbenzimidazole + nicotinate beta-D-ribonucleotide = alpha-ribazole 5'-phosphate + nicotinate + H(+). It functions in the pathway nucleoside biosynthesis; alpha-ribazole biosynthesis; alpha-ribazole from 5,6-dimethylbenzimidazole: step 1/2. Its function is as follows. Catalyzes the synthesis of alpha-ribazole-5'-phosphate from nicotinate mononucleotide (NAMN) and 5,6-dimethylbenzimidazole (DMB). The sequence is that of Nicotinate-nucleotide--dimethylbenzimidazole phosphoribosyltransferase from Desulfotalea psychrophila (strain LSv54 / DSM 12343).